Reading from the N-terminus, the 205-residue chain is uncharacterized protein (205 aa).

The region spanning Met1–Ala82 is the GST N-terminal domain. Glutathione contacts are provided by residues Val53 and Glu66–Thr67. A GST C-terminal domain is found at Gly86–Ile205.

The protein belongs to the GST superfamily. Beta family.

This is an uncharacterized protein from Escherichia coli (strain K12).